Reading from the N-terminus, the 360-residue chain is Dual-specificity RNA methyltransferase RlmN (360 aa).

Glu89 (proton acceptor) is an active-site residue. Residues 95–330 form the Radical SAM core domain; it reads DSGRGTLCVS…TRVTRGQDID (236 aa). Cys102 and Cys333 are joined by a disulfide. Residues Cys109, Cys113, and Cys116 each contribute to the [4Fe-4S] cluster site. S-adenosyl-L-methionine is bound by residues 159-160, Ser191, 213-215, and Asn290; these read GE and SLH. Cys333 functions as the S-methylcysteine intermediate in the catalytic mechanism.

The protein belongs to the radical SAM superfamily. RlmN family. The cofactor is [4Fe-4S] cluster.

It localises to the cytoplasm. It catalyses the reaction adenosine(2503) in 23S rRNA + 2 reduced [2Fe-2S]-[ferredoxin] + 2 S-adenosyl-L-methionine = 2-methyladenosine(2503) in 23S rRNA + 5'-deoxyadenosine + L-methionine + 2 oxidized [2Fe-2S]-[ferredoxin] + S-adenosyl-L-homocysteine. The enzyme catalyses adenosine(37) in tRNA + 2 reduced [2Fe-2S]-[ferredoxin] + 2 S-adenosyl-L-methionine = 2-methyladenosine(37) in tRNA + 5'-deoxyadenosine + L-methionine + 2 oxidized [2Fe-2S]-[ferredoxin] + S-adenosyl-L-homocysteine. In terms of biological role, specifically methylates position 2 of adenine 2503 in 23S rRNA and position 2 of adenine 37 in tRNAs. m2A2503 modification seems to play a crucial role in the proofreading step occurring at the peptidyl transferase center and thus would serve to optimize ribosomal fidelity. The chain is Dual-specificity RNA methyltransferase RlmN from Alkalilimnicola ehrlichii (strain ATCC BAA-1101 / DSM 17681 / MLHE-1).